A 98-amino-acid chain; its full sequence is Small ribosomal subunit protein uS19 (98 aa).

The tract at residues 77 to 98 (TRTFRGHAGGKAEKGGSAPKKK) is disordered.

Belongs to the universal ribosomal protein uS19 family.

Protein S19 forms a complex with S13 that binds strongly to the 16S ribosomal RNA. The polypeptide is Small ribosomal subunit protein uS19 (Chlorobium phaeobacteroides (strain DSM 266 / SMG 266 / 2430)).